Consider the following 364-residue polypeptide: Ribosomal RNA large subunit methyltransferase M (364 aa).

Residues serine 187, 220 to 223 (CPGG), aspartate 239, aspartate 259, and aspartate 276 each bind S-adenosyl-L-methionine. Lysine 305 functions as the Proton acceptor in the catalytic mechanism.

It belongs to the class I-like SAM-binding methyltransferase superfamily. RNA methyltransferase RlmE family. RlmM subfamily. In terms of assembly, monomer.

It localises to the cytoplasm. The enzyme catalyses cytidine(2498) in 23S rRNA + S-adenosyl-L-methionine = 2'-O-methylcytidine(2498) in 23S rRNA + S-adenosyl-L-homocysteine + H(+). Catalyzes the 2'-O-methylation at nucleotide C2498 in 23S rRNA. The polypeptide is Ribosomal RNA large subunit methyltransferase M (Aeromonas salmonicida (strain A449)).